The chain runs to 596 residues: Nuclear receptor subfamily 2 group C member 2 (596 aa).

Position 19 is a phosphoserine; by MAPK (S19). S46 carries the phosphoserine modification. Phosphoserine; by MAPK is present on residues S55 and S68. Phosphoserine is present on S98. Positions 114 to 189 form a DNA-binding region, nuclear receptor; that stretch reads VEYCVVCGDK…MGMKMESVQS (76 aa). NR C4-type zinc fingers lie at residues 117 to 137 and 153 to 177; these read CVVCGDKASGRHYGAVSCEGC and CRSSQDCIINKHHRNRCQFCRLKKC. Residue K192 forms a Glycyl lysine isopeptide (Lys-Gly) (interchain with G-Cter in SUMO2) linkage. Position 219 is a phosphoserine (S219). The residue at position 231 (K231) is an N6-acetyllysine. The NR LBD domain occupies 341 to 583; the sequence is GSIHVISRDQ…SIIPYILKME (243 aa).

It belongs to the nuclear hormone receptor family. NR2 subfamily. As to quaternary structure, homodimer; can bind DNA as homodimer. Heterodimer; binds DNA as a heterodimer with NR2C1 required for chromatin remodeling and for binding to promoter regions such as globin DR1 repeats. Interacts with NR2C2AP; the interaction represses selective NR2C2-mediated transcriptional activity. Interacts with PCAF; the interaction preferentially occurs on the non-phosphorylated form and induces NR2C2-mediated transactivation activity and does not require the ligand-binding domain. Interacts (MAPK-mediated phosphorylated form) with NRIP1; the interaction promotes repression of NR2C2-mediated activity. Interacts with NLRP10. Interacts (via ligand-binding region) with transcriptional corepressor JAZF1; the interaction promotes NR2C2-mediated transcriptional repression. In terms of processing, phosphorylation on Ser-19 and Ser-68 is an important regulator of NR2C2-mediated transcriptional activity. Phosphorylation on these residues recruits the corepressor, NRIP1, leading to transcripional repression, whereas the non-phosphorylated form preferentially recruits the coactivator, PCAF. In terms of tissue distribution, expressed, during embryogenesis, in perichondrium, developing glomeruli structures and tubules of kidney, as well as in intestiinal villi. Also expressed in lung and hair follicles.

The protein localises to the nucleus. Functionally, orphan nuclear receptor that can act as a repressor or activator of transcription. An important repressor of nuclear receptor signaling pathways such as retinoic acid receptor, retinoid X, vitamin D3 receptor, thyroid hormone receptor and estrogen receptor pathways. May regulate gene expression during the late phase of spermatogenesis. Activates transcriptional activity of LHCG and is antagonist of PPARA-mediated transactivation. Together with NR2C1, forms the core of the DRED (direct repeat erythroid-definitive) complex that represses embryonic and fetal globin transcription including that of GATA1. Binds to hormone response elements (HREs) consisting of two 5'-AGGTCA-3' half site direct repeat consensus sequences. Plays a fundamental role in early embryonic development and embryonic stem cells. Required for normal spermatogenesis and cerebellum development. Appears to be important for neurodevelopmentally regulated behavior. The chain is Nuclear receptor subfamily 2 group C member 2 (Nr2c2) from Mus musculus (Mouse).